We begin with the raw amino-acid sequence, 150 residues long: SsrA-binding protein (150 aa).

Residues 129 to 150 (KRQTLKSKEADREMARALRDRH) form a disordered region.

Belongs to the SmpB family.

It is found in the cytoplasm. In terms of biological role, required for rescue of stalled ribosomes mediated by trans-translation. Binds to transfer-messenger RNA (tmRNA), required for stable association of tmRNA with ribosomes. tmRNA and SmpB together mimic tRNA shape, replacing the anticodon stem-loop with SmpB. tmRNA is encoded by the ssrA gene; the 2 termini fold to resemble tRNA(Ala) and it encodes a 'tag peptide', a short internal open reading frame. During trans-translation Ala-aminoacylated tmRNA acts like a tRNA, entering the A-site of stalled ribosomes, displacing the stalled mRNA. The ribosome then switches to translate the ORF on the tmRNA; the nascent peptide is terminated with the 'tag peptide' encoded by the tmRNA and targeted for degradation. The ribosome is freed to recommence translation, which seems to be the essential function of trans-translation. The sequence is that of SsrA-binding protein from Syntrophotalea carbinolica (strain DSM 2380 / NBRC 103641 / GraBd1) (Pelobacter carbinolicus).